The following is a 269-amino-acid chain: MGKITAIKKLKRLYRVDLSDLDEEKIYLCEDTIIHFFITIDKEVSETDLEEILAYDQFAQGKSLALYYISFKMRTGAEVRKYLLEHDINDTDQIEQVLSVLTENNLINDKSYAENFIEGKISMGSSGPYQIKQKLLTKGISNDVLSEALKEIYSEEKQIDVAYKLASKLSRTYGTRLTLKQLKDKIIQNLMNKGFSYSVSSIALDSLELEADEENEMDLLYSELDKVAKRYTKNYEGYERKQKITQALARKGFSYDDISSALRDYTFPE.

Belongs to the RecX family.

It is found in the cytoplasm. In terms of biological role, modulates RecA activity. The chain is Regulatory protein RecX from Lactococcus lactis subsp. cremoris (strain SK11).